Consider the following 202-residue polypeptide: Glycerol-3-phosphate acyltransferase (202 aa).

6 helical membrane passes run 3-23 (NLIIYAFIYLLGSISFGLILT), 61-81 (IATIILDFAKAAIPLLILKFL), 87-107 (LLWSVAVLAIFGHCFSIYLLF), 117-137 (AGAMIVLLPLEVLTAFIVWAV), 144-164 (ISSLASLAALLAFIVSSFIFN), and 167-187 (LEIHTHAPVFIIAFIIVYKHL).

Belongs to the PlsY family. Probably interacts with PlsX.

Its subcellular location is the cell inner membrane. The enzyme catalyses an acyl phosphate + sn-glycerol 3-phosphate = a 1-acyl-sn-glycero-3-phosphate + phosphate. The protein operates within lipid metabolism; phospholipid metabolism. Catalyzes the transfer of an acyl group from acyl-phosphate (acyl-PO(4)) to glycerol-3-phosphate (G3P) to form lysophosphatidic acid (LPA). This enzyme utilizes acyl-phosphate as fatty acyl donor, but not acyl-CoA or acyl-ACP. In Campylobacter jejuni subsp. doylei (strain ATCC BAA-1458 / RM4099 / 269.97), this protein is Glycerol-3-phosphate acyltransferase.